The chain runs to 298 residues: N-acetylmuramic acid 6-phosphate etherase (298 aa).

The 164-residue stretch at 55–218 folds into the SIS domain; it reads IHAQVSGGGR…STGLMIKSGK (164 aa). Residue Glu83 is the Proton donor of the active site. Glu114 is an active-site residue.

Belongs to the GCKR-like family. MurNAc-6-P etherase subfamily. In terms of assembly, homodimer.

It catalyses the reaction N-acetyl-D-muramate 6-phosphate + H2O = N-acetyl-D-glucosamine 6-phosphate + (R)-lactate. The protein operates within amino-sugar metabolism; 1,6-anhydro-N-acetylmuramate degradation. It functions in the pathway amino-sugar metabolism; N-acetylmuramate degradation. It participates in cell wall biogenesis; peptidoglycan recycling. Specifically catalyzes the cleavage of the D-lactyl ether substituent of MurNAc 6-phosphate, producing GlcNAc 6-phosphate and D-lactate. Together with AnmK, is also required for the utilization of anhydro-N-acetylmuramic acid (anhMurNAc) either imported from the medium or derived from its own cell wall murein, and thus plays a role in cell wall recycling. This chain is N-acetylmuramic acid 6-phosphate etherase, found in Escherichia coli O81 (strain ED1a).